The following is an 831-amino-acid chain: Replication restart protein PriA (831 aa).

One can recognise a Helicase ATP-binding domain in the interval 304-471 (VLPLQGYHQV…HRHQNDPQRH (168 aa)). Residue 317 to 324 (GVTGSGKT) coordinates ATP. Residues 413–416 (DEEH) carry the DEAH box motif. 8 residues coordinate Zn(2+): Cys537, Cys540, Cys546, Cys549, Cys568, Cys571, Cys581, and Cys584. Residues 575-735 (EIQPKVCPEC…ELPQREMLNY (161 aa)) form the Helicase C-terminal domain.

Belongs to the helicase family. PriA subfamily. In terms of assembly, component of the replication restart primosome. It depends on Zn(2+) as a cofactor.

It carries out the reaction Couples ATP hydrolysis with the unwinding of duplex DNA by translocating in the 3'-5' direction.. The enzyme catalyses ATP + H2O = ADP + phosphate + H(+). Functionally, initiates the restart of stalled replication forks, which reloads the replicative helicase on sites other than the origin of replication. Recognizes and binds to abandoned replication forks and remodels them to uncover a helicase loading site. Promotes assembly of the primosome at these replication forks. This Synechocystis sp. (strain ATCC 27184 / PCC 6803 / Kazusa) protein is Replication restart protein PriA.